We begin with the raw amino-acid sequence, 556 residues long: 5-aminolevulinate synthase, mitochondrial (556 aa).

The N-terminal 46 residues, Met-1 to Ala-46, are a transit peptide targeting the mitochondrion. Positions 105, 218, and 237 each coordinate substrate. Ser-270, His-298, and Thr-342 together coordinate pyridoxal 5'-phosphate. Lys-345 is an active-site residue. Lys-345 is modified (N6-(pyridoxal phosphate)lysine). Positions 374 and 375 each coordinate pyridoxal 5'-phosphate. Thr-460 serves as a coordination point for substrate.

This sequence belongs to the class-II pyridoxal-phosphate-dependent aminotransferase family. Homodimer. Requires pyridoxal 5'-phosphate as cofactor.

It localises to the mitochondrion matrix. It catalyses the reaction succinyl-CoA + glycine + H(+) = 5-aminolevulinate + CO2 + CoA. It functions in the pathway porphyrin-containing compound metabolism; protoporphyrin-IX biosynthesis; 5-aminolevulinate from glycine: step 1/1. Functionally, catalyzes the synthesis of 5-aminolevulinate (ALA) from succinyl-CoA and glycine, the first and rate-limiting step in heme biosynthesis. The protein is 5-aminolevulinate synthase, mitochondrial (HEM1) of Eremothecium gossypii (strain ATCC 10895 / CBS 109.51 / FGSC 9923 / NRRL Y-1056) (Yeast).